The sequence spans 729 residues: 1,4-alpha-glucan branching enzyme GlgB (729 aa).

Catalysis depends on Asp407, which acts as the Nucleophile. The active-site Proton donor is the Glu460.

The protein belongs to the glycosyl hydrolase 13 family. GlgB subfamily. As to quaternary structure, monomer.

The catalysed reaction is Transfers a segment of a (1-&gt;4)-alpha-D-glucan chain to a primary hydroxy group in a similar glucan chain.. The protein operates within glycan biosynthesis; glycogen biosynthesis. Its function is as follows. Catalyzes the formation of the alpha-1,6-glucosidic linkages in glycogen by scission of a 1,4-alpha-linked oligosaccharide from growing alpha-1,4-glucan chains and the subsequent attachment of the oligosaccharide to the alpha-1,6 position. The sequence is that of 1,4-alpha-glucan branching enzyme GlgB from Pseudoalteromonas atlantica (strain T6c / ATCC BAA-1087).